A 149-amino-acid chain; its full sequence is Large ribosomal subunit protein uL15 (149 aa).

The segment at M1–L57 is disordered. Positions I23–M35 are enriched in gly residues.

This sequence belongs to the universal ribosomal protein uL15 family. Part of the 50S ribosomal subunit.

Binds to the 23S rRNA. The chain is Large ribosomal subunit protein uL15 from Acaryochloris marina (strain MBIC 11017).